The chain runs to 653 residues: Endoglin (653 aa).

An N-terminal signal peptide occupies residues 1 to 24 (MDRGVLPQAIALLLAVCSFGPTAG). The Extracellular portion of the chain corresponds to 25–581 (LAEGVQCDLQ…IVSPGLPDKG (557 aa)). Positions 27–44 (EGVQCDLQPVDPKVTYTT) are OR1, N-terminal part. The tract at residues 27–336 (EGVQCDLQPV…RSCGSGLQPS (310 aa)) is required for interaction with GDF2. Cystine bridges form between cysteine 31–cysteine 206, cysteine 51–cysteine 181, cysteine 241–cysteine 329, cysteine 349–cysteine 381, cysteine 362–cysteine 442, cysteine 393–cysteine 411, and cysteine 493–cysteine 549. The segment at 45-198 (SQVSEGCVAH…MGHTLEWKSH (154 aa)) is OR2. N-linked (GlcNAc...) asparagine glycosylation is present at asparagine 57. Positions 199 to 329 (TQASVLGCHL…SVISLQDRSC (131 aa)) are OR1, C-terminal part. Residues 269–281 (KAWTTGEYSFKIF) are essential for interaction with GDF2. N-linked (GlcNAc...) asparagine glycosylation occurs at asparagine 306. Residues 362 to 512 (CSDDVMTLVL…MVDLIQNQEA (151 aa)) form the ZP domain. Residues 582–606 (LVLPAVLGITFGAFLIGALLTAALW) traverse the membrane as a helical segment. Over 607–653 (YIHSHTRHPGKREPVVAVAAPASSESSSTNHSIGSTQSTPCSTSSMA) the chain is Cytoplasmic. Low complexity predominate over residues 625 to 634 (AAPASSESSS). A disordered region spans residues 625–653 (AAPASSESSSTNHSIGSTQSTPCSTSSMA). The segment covering 635-653 (TNHSIGSTQSTPCSTSSMA) has biased composition (polar residues). Serine 641 and serine 644 each carry phosphoserine; by TGFBR1.

Homodimer; disulfide-linked. Forms a heteromeric complex with the signaling receptors for transforming growth factor-beta: TGFBR1 and/or TGFBR2. It is able to bind TGFB1 and TGFB2 with high affinity, but not TGFB3. Interacts with GDF2, forming a heterotetramer with a 2:2 stoichiometry. Interacts with ACVRL1. Can form a heteromeric complex with GDF2 and ACVRL1. Interacts with BMP10. Interacts with DYNLT4. Interacts with ARRB2.

Its subcellular location is the cell membrane. Its function is as follows. Vascular endothelium glycoprotein that plays an important role in the regulation of angiogenesis. Required for normal structure and integrity of adult vasculature. Regulates the migration of vascular endothelial cells. Required for normal extraembryonic angiogenesis and for embryonic heart development. May regulate endothelial cell shape changes in response to blood flow, which drive vascular remodeling and establishment of normal vascular morphology during angiogenesis. May play a role in the binding of endothelial cells to integrins. Acts as a TGF-beta coreceptor and is involved in the TGF-beta/BMP signaling cascade that ultimately leads to the activation of SMAD transcription factors. Required for GDF2/BMP9 signaling through SMAD1 in endothelial cells and modulates TGFB1 signaling through SMAD3. This is Endoglin (ENG) from Sus scrofa (Pig).